A 362-amino-acid chain; its full sequence is Holliday junction branch migration complex subunit RuvB (362 aa).

Residues 1–27 (MANIEKTEFHVPAPVSAAGNQKSSLGN) form a disordered region. A large ATPase domain (RuvB-L) region spans residues 13–206 (APVSAAGNQK…FGFTAQMEFY (194 aa)). ATP contacts are provided by residues Leu-45, Arg-46, Gly-87, Lys-90, Thr-91, Thr-92, 153 to 155 (EDF), Arg-196, Tyr-206, and Arg-243. Thr-91 is a binding site for Mg(2+). The interval 207-277 (EVEDLTKVVV…AAQAALVVFD (71 aa)) is small ATPAse domain (RuvB-S). A head domain (RuvB-H) region spans residues 280-362 (EMGLDRLDRA…EPPEGIIGSL (83 aa)). DNA-binding residues include Arg-335 and Arg-340.

Belongs to the RuvB family. As to quaternary structure, homohexamer. Forms an RuvA(8)-RuvB(12)-Holliday junction (HJ) complex. HJ DNA is sandwiched between 2 RuvA tetramers; dsDNA enters through RuvA and exits via RuvB. An RuvB hexamer assembles on each DNA strand where it exits the tetramer. Each RuvB hexamer is contacted by two RuvA subunits (via domain III) on 2 adjacent RuvB subunits; this complex drives branch migration. In the full resolvosome a probable DNA-RuvA(4)-RuvB(12)-RuvC(2) complex forms which resolves the HJ.

Its subcellular location is the cytoplasm. The enzyme catalyses ATP + H2O = ADP + phosphate + H(+). Its function is as follows. The RuvA-RuvB-RuvC complex processes Holliday junction (HJ) DNA during genetic recombination and DNA repair, while the RuvA-RuvB complex plays an important role in the rescue of blocked DNA replication forks via replication fork reversal (RFR). RuvA specifically binds to HJ cruciform DNA, conferring on it an open structure. The RuvB hexamer acts as an ATP-dependent pump, pulling dsDNA into and through the RuvAB complex. RuvB forms 2 homohexamers on either side of HJ DNA bound by 1 or 2 RuvA tetramers; 4 subunits per hexamer contact DNA at a time. Coordinated motions by a converter formed by DNA-disengaged RuvB subunits stimulates ATP hydrolysis and nucleotide exchange. Immobilization of the converter enables RuvB to convert the ATP-contained energy into a lever motion, pulling 2 nucleotides of DNA out of the RuvA tetramer per ATP hydrolyzed, thus driving DNA branch migration. The RuvB motors rotate together with the DNA substrate, which together with the progressing nucleotide cycle form the mechanistic basis for DNA recombination by continuous HJ branch migration. Branch migration allows RuvC to scan DNA until it finds its consensus sequence, where it cleaves and resolves cruciform DNA. This Corynebacterium diphtheriae (strain ATCC 700971 / NCTC 13129 / Biotype gravis) protein is Holliday junction branch migration complex subunit RuvB.